A 187-amino-acid chain; its full sequence is CASP-like protein SELMODRAFT_416718 (187 aa).

A helical membrane pass occupies residues 1–21 (MMFGGVGMATLPLSLIFAFKN). Residues 22–100 (RPKCVITRAQ…EAFPQGEKAD (79 aa)) lie on the Extracellular side of the membrane. The chain crosses the membrane as a helical span at residues 101–119 (TSWALTVLFYLAKLVFGIL). The Cytoplasmic portion of the chain corresponds to 120 to 125 (GLALSV). Residues 126–145 (IWLLHIIVFMLVNPPAFPFL) form a helical membrane-spanning segment. Over 146–155 (NQVFIQLDSA) the chain is Extracellular. A helical transmembrane segment spans residues 156-176 (WGLLGTTAFAIFCYYLVMSVI). Residues 177–187 (SGEMHSIYPMK) lie on the Cytoplasmic side of the membrane.

The protein belongs to the Casparian strip membrane proteins (CASP) family. As to quaternary structure, homodimer and heterodimers.

Its subcellular location is the cell membrane. The protein is CASP-like protein SELMODRAFT_416718 of Selaginella moellendorffii (Spikemoss).